A 109-amino-acid chain; its full sequence is MLGLLGNTTLVCWITGTALAFLMLLWLMALCLFHRSQEHDVERNRVRQARPRLFHGRRLRLPRLVHHHHHHHVTGVTSVGVHHHHHHSPHRLHHHKHHHRHHHAHGARR.

A helical transmembrane segment spans residues 13–33 (WITGTALAFLMLLWLMALCLF). The interval 77–109 (TSVGVHHHHHHSPHRLHHHKHHHRHHHAHGARR) is disordered. A compositionally biased stretch (basic residues) spans 81-109 (VHHHHHHSPHRLHHHKHHHRHHHAHGARR).

It localises to the membrane. This chain is Histidine-rich carboxyl terminus protein 1 (Hrct1), found in Mus musculus (Mouse).